A 683-amino-acid chain; its full sequence is WD repeat-containing protein 48 homolog (683 aa).

WD repeat units follow at residues 27–82 (SNRS…PVQY), 88–130 (QHTD…FIDC), 133–167 (THKD…INAN), 176–215 (GCKD…KIMK), 218–257 (GHTD…CIAT), 260–299 (AHEE…KSQL), and 302–343 (KEEA…QLSI). Residues 341-364 (LSIGGDEDGPSTSNANHSVSASSS) form a disordered region. Low complexity predominate over residues 351–364 (STSNANHSVSASSS). A WD 8 repeat occupies 389–428 (PGAPAIKKHAMLSDKRHVLTRDSDGNVALYDVLAARKIKD).

It belongs to the WD repeat WDR48 family. Interacts with usp-46; the interaction increases the catalytic activity of usp-46 in the presence of wdr-20. As to expression, expressed in several head neurons and cells in the tail including the anal depressor cell.

Functionally, together with wdr-20, binds to and stimulates the activity of the deubiquitinating enzyme usp-46, leading to deubiquitination and stabilization of the glr-1 glutamate receptor. The protein is WD repeat-containing protein 48 homolog (wdr-48) of Caenorhabditis elegans.